We begin with the raw amino-acid sequence, 238 residues long: ATP-dependent dethiobiotin synthetase BioD (238 aa).

12-17 (GVGKTV) serves as a coordination point for ATP. Thr16 is a Mg(2+) binding site. The active site involves Lys37. Substrate is bound at residue Thr41. Residues Asp50, 109–112 (EGAG), 170–171 (GS), and 200–202 (PAG) contribute to the ATP site. The Mg(2+) site is built by Asp50 and Glu109.

The protein belongs to the dethiobiotin synthetase family. In terms of assembly, homodimer. Mg(2+) serves as cofactor.

The protein localises to the cytoplasm. The catalysed reaction is (7R,8S)-7,8-diammoniononanoate + CO2 + ATP = (4R,5S)-dethiobiotin + ADP + phosphate + 3 H(+). The protein operates within cofactor biosynthesis; biotin biosynthesis; biotin from 7,8-diaminononanoate: step 1/2. Its function is as follows. Catalyzes a mechanistically unusual reaction, the ATP-dependent insertion of CO2 between the N7 and N8 nitrogen atoms of 7,8-diaminopelargonic acid (DAPA, also called 7,8-diammoniononanoate) to form a ureido ring. The chain is ATP-dependent dethiobiotin synthetase BioD from Frankia casuarinae (strain DSM 45818 / CECT 9043 / HFP020203 / CcI3).